The primary structure comprises 160 residues: Transcription elongation factor GreA (160 aa).

Belongs to the GreA/GreB family.

In terms of biological role, necessary for efficient RNA polymerase transcription elongation past template-encoded arresting sites. The arresting sites in DNA have the property of trapping a certain fraction of elongating RNA polymerases that pass through, resulting in locked ternary complexes. Cleavage of the nascent transcript by cleavage factors such as GreA or GreB allows the resumption of elongation from the new 3'terminus. GreA releases sequences of 2 to 3 nucleotides. The chain is Transcription elongation factor GreA from Francisella philomiragia subsp. philomiragia (strain ATCC 25017 / CCUG 19701 / FSC 153 / O#319-036).